The primary structure comprises 63 residues: Large ribosomal subunit protein bL35 (63 aa).

The interval 1–22 (MPKMKTKSGATKRFKKTATGFK) is disordered.

Belongs to the bacterial ribosomal protein bL35 family.

The chain is Large ribosomal subunit protein bL35 from Marinobacter nauticus (strain ATCC 700491 / DSM 11845 / VT8) (Marinobacter aquaeolei).